The chain runs to 146 residues: Small ribosomal subunit protein bS16 (146 aa).

Over residues 84–102 (SHLEAQKAAVERLGRRKDY) the composition is skewed to basic and acidic residues. Positions 84–146 (SHLEAQKAAV…DAPAAEATTE (63 aa)) are disordered. The segment covering 110 to 119 (APKAAPVAEA) has biased composition (low complexity). Acidic residues predominate over residues 120 to 130 (PAEEAPAEEPA). Residues 131–146 (AEASTDDAPAAEATTE) show a composition bias toward low complexity.

Belongs to the bacterial ribosomal protein bS16 family.

In Rhodopirellula baltica (strain DSM 10527 / NCIMB 13988 / SH1), this protein is Small ribosomal subunit protein bS16.